A 201-amino-acid polypeptide reads, in one-letter code: 3-isopropylmalate dehydratase small subunit (201 aa).

Belongs to the LeuD family. LeuD type 1 subfamily. In terms of assembly, heterodimer of LeuC and LeuD.

The enzyme catalyses (2R,3S)-3-isopropylmalate = (2S)-2-isopropylmalate. It participates in amino-acid biosynthesis; L-leucine biosynthesis; L-leucine from 3-methyl-2-oxobutanoate: step 2/4. Its function is as follows. Catalyzes the isomerization between 2-isopropylmalate and 3-isopropylmalate, via the formation of 2-isopropylmaleate. The protein is 3-isopropylmalate dehydratase small subunit of Paracoccus denitrificans (strain Pd 1222).